A 518-amino-acid polypeptide reads, in one-letter code: ATP synthase subunit alpha (518 aa).

169–176 (GDRQTGKT) provides a ligand contact to ATP.

It belongs to the ATPase alpha/beta chains family. In terms of assembly, F-type ATPases have 2 components, CF(1) - the catalytic core - and CF(0) - the membrane proton channel. CF(1) has five subunits: alpha(3), beta(3), gamma(1), delta(1), epsilon(1). CF(0) has three main subunits: a(1), b(2) and c(9-12). The alpha and beta chains form an alternating ring which encloses part of the gamma chain. CF(1) is attached to CF(0) by a central stalk formed by the gamma and epsilon chains, while a peripheral stalk is formed by the delta and b chains.

Its subcellular location is the cell membrane. It catalyses the reaction ATP + H2O + 4 H(+)(in) = ADP + phosphate + 5 H(+)(out). Functionally, produces ATP from ADP in the presence of a proton gradient across the membrane. The alpha chain is a regulatory subunit. This Mycoplasma genitalium (strain ATCC 33530 / DSM 19775 / NCTC 10195 / G37) (Mycoplasmoides genitalium) protein is ATP synthase subunit alpha.